The primary structure comprises 589 residues: EZH inhibitory protein (589 aa).

Disordered stretches follow at residues 1–46 (MASS…LRLR), 61–548 (AGED…SGPN), and 561–589 (LDSS…KCRG). Gly residues-rich tracts occupy residues 29-38 (GPRGRGGPSG) and 105-114 (PKGGGKADQG). The span at 147–161 (GAAGPPLPGARGSPA) shows a compositional bias: low complexity. Positions 193–204 (LRSSTSQGSGST) are enriched in polar residues. 4 stretches are compositionally biased toward low complexity: residues 299–308 (RSSASAVSPE), 325–334 (RSSASVVSPE), 351–360 (RSSASVVSPE), and 374–390 (PRAT…TTRS). S306 is modified (phosphoserine). Positions 426 to 437 (MRLDLQVDREPE) are enriched in basic and acidic residues. Positions 438-449 (SEAEQEEQELES) are enriched in acidic residues. Over residues 450-465 (EPGPSSRPQASRSSSR) the composition is skewed to low complexity. The sufficient for interaction with EZH2 stretch occupies residues 482 to 490 (RRPVRMRAS). Positions 484 to 503 (PVRMRASSPSPPGRLYPLPK) are necessary and sufficient for inhibition of PRC2/EED-EZH1 and PRC2/EED-EZH2 complex activity. Positions 509–547 (VHSPSSSSSESSSVSSSHSPLNKAPDPGSSPPLSSLSGP) are enriched in low complexity. Residues 575-589 (AAPHTREEEDKKCRG) are compositionally biased toward basic and acidic residues.

As to quaternary structure, interacts with PRC2/EED-EZH1 complex member EZH1 and with PRC2/EED-EZH2 complex member EZH2; the interaction blocks EZH1/EZH2 methyltransferase activity. Interacts (via C-terminus) with SUZ12 which is a member of the PRC2/EED-EZH1 and PRC2/EED-EZH2 complexes. As to expression, highly expressed in ovary with lower expression in testis and very low levels in other tissues tested including prostate, brain, kidney, spleen and liver. During spermatogenesis, expressed mainly in spermatogonia with very low expression in spermatocytes I and II.

The protein resides in the nucleus. The protein localises to the cytoplasm. Inhibits PRC2/EED-EZH1 and PRC2/EED-EZH2 complex function by inhibiting EZH1/EZH2 methyltransferase activity, thereby causing down-regulation of histone H3 trimethylation at 'Lys-27' (H3K27me3). Probably inhibits methyltransferase activity by limiting the stimulatory effect of cofactors such as AEBP2 and JARID2. Inhibits H3K27me3 deposition during spermatogenesis and oogenesis. This is EZH inhibitory protein from Mus musculus (Mouse).